Consider the following 67-residue polypeptide: Beta-defensin 14 (67 aa).

An N-terminal signal peptide occupies residues 1–22 (MRLHYLLFVFLILFLVPAPGDA). 3 cysteine pairs are disulfide-bonded: cysteine 33–cysteine 62, cysteine 40–cysteine 55, and cysteine 45–cysteine 63.

It belongs to the beta-defensin family.

The protein resides in the secreted. Functionally, has antibacterial activity. This Mus musculus (Mouse) protein is Beta-defensin 14 (Defb14).